The following is a 301-amino-acid chain: Light-independent protochlorophyllide reductase iron-sulfur ATP-binding protein (301 aa).

A compositionally biased stretch (low complexity) spans 1 to 13; sequence MNVTLRPPLTTAP. Residues 1–21 are disordered; it reads MNVTLRPPLTTAPRRPDGAGS. Residues 45–50 and K74 each bind ATP; that span reads GIGKST. S49 provides a ligand contact to Mg(2+). The [4Fe-4S] cluster site is built by C130 and C164. ATP contacts are provided by residues 215–216 and 239–241; these read NR and PDL.

This sequence belongs to the NifH/BchL/ChlL family. As to quaternary structure, homodimer. Protochlorophyllide reductase is composed of three subunits; BchL, BchN and BchB. [4Fe-4S] cluster serves as cofactor.

It catalyses the reaction chlorophyllide a + oxidized 2[4Fe-4S]-[ferredoxin] + 2 ADP + 2 phosphate = protochlorophyllide a + reduced 2[4Fe-4S]-[ferredoxin] + 2 ATP + 2 H2O. Its pathway is porphyrin-containing compound metabolism; bacteriochlorophyll biosynthesis (light-independent). In terms of biological role, component of the dark-operative protochlorophyllide reductase (DPOR) that uses Mg-ATP and reduced ferredoxin to reduce ring D of protochlorophyllide (Pchlide) to form chlorophyllide a (Chlide). This reaction is light-independent. The L component serves as a unique electron donor to the NB-component of the complex, and binds Mg-ATP. The sequence is that of Light-independent protochlorophyllide reductase iron-sulfur ATP-binding protein from Bradyrhizobium sp. (strain BTAi1 / ATCC BAA-1182).